Here is a 429-residue protein sequence, read N- to C-terminus: Ribonuclease E/G-like protein (429 aa).

Asp290 and Asp332 together coordinate Mg(2+).

The protein belongs to the RNase E/G family. It depends on Mg(2+) as a cofactor.

It is found in the plastid. Its subcellular location is the chloroplast stroma. Functionally, involved in intercistronic processing of primary transcripts from chloroplast operons. The endonucleolytic activity of the enzyme depends on the number of phosphates at the 5' end, is inhibited by structured RNA, and preferentially cleaves A/U-rich sequences. The chain is Ribonuclease E/G-like protein (rne) from Guillardia theta (Cryptophyte).